The following is a 387-amino-acid chain: Phosphoglycerate kinase (387 aa).

Residues 21–23 (DLN), Arg36, 59–62 (HLGR), Arg113, and Arg146 each bind substrate. ATP contacts are provided by residues Lys197, Glu314, and 340–343 (GGDT).

The protein belongs to the phosphoglycerate kinase family. Monomer.

Its subcellular location is the cytoplasm. The enzyme catalyses (2R)-3-phosphoglycerate + ATP = (2R)-3-phospho-glyceroyl phosphate + ADP. Its pathway is carbohydrate degradation; glycolysis; pyruvate from D-glyceraldehyde 3-phosphate: step 2/5. The polypeptide is Phosphoglycerate kinase (Pseudomonas aeruginosa (strain ATCC 15692 / DSM 22644 / CIP 104116 / JCM 14847 / LMG 12228 / 1C / PRS 101 / PAO1)).